A 368-amino-acid polypeptide reads, in one-letter code: Probable pectate lyase 4 (368 aa).

Residues 1–25 (MASLVVIVSLLLAAFASPLLETAHS) form the signal peptide. An N-linked (GlcNAc...) asparagine glycan is attached at Asn-27. 3 residues coordinate Ca(2+): Asp-167, Asp-191, and Asp-195. Residue Arg-247 is part of the active site.

It belongs to the polysaccharide lyase 1 family. Requires Ca(2+) as cofactor.

It carries out the reaction Eliminative cleavage of (1-&gt;4)-alpha-D-galacturonan to give oligosaccharides with 4-deoxy-alpha-D-galact-4-enuronosyl groups at their non-reducing ends.. Its pathway is glycan metabolism; pectin degradation; 2-dehydro-3-deoxy-D-gluconate from pectin: step 2/5. The polypeptide is Probable pectate lyase 4 (Arabidopsis thaliana (Mouse-ear cress)).